The sequence spans 176 residues: Large ribosomal subunit protein uL6 (176 aa).

The segment covering 156-170 has biased composition (basic and acidic residues); sequence YKGKGVRYADEQVRR. The segment at 156–176 is disordered; that stretch reads YKGKGVRYADEQVRRKEAKKK.

It belongs to the universal ribosomal protein uL6 family. In terms of assembly, part of the 50S ribosomal subunit.

Its function is as follows. This protein binds to the 23S rRNA, and is important in its secondary structure. It is located near the subunit interface in the base of the L7/L12 stalk, and near the tRNA binding site of the peptidyltransferase center. This is Large ribosomal subunit protein uL6 from Shewanella woodyi (strain ATCC 51908 / MS32).